A 44-amino-acid chain; its full sequence is Alpha-amylase inhibitor magnificamide (44 aa).

3 disulfide bridges follow: cysteine 6/cysteine 38, cysteine 16/cysteine 33, and cysteine 20/cysteine 39. The segment at 7 to 10 (YIYH) is inhibitory motif.

This sequence belongs to the sea anemone alpha-amylase inhibitor family.

Its subcellular location is the secreted. Mammalian alpha-amylase (AMY2A) inhibitor. The recombinant peptide inhibits porcine pancreatic (Ki=0.17 nM) and human saliva alpha-amylases (Ki=7.7 nM). It does not show antimicrobial (tested on fungi and bacteria) or channel modulating activities (tested on 18 voltage-gated sodium and potassium channles). In Heteractis magnifica (Magnificent sea anemone), this protein is Alpha-amylase inhibitor magnificamide.